The sequence spans 271 residues: 2-amino-3,7-dideoxy-D-threo-hept-6-ulosonate synthase (271 aa).

Residue D33 is the Proton acceptor of the active site. 1-deoxy-D-threo-hexo-2,5-diulose 6-phosphate-binding positions include 33–37 (DHGVS) and 153–155 (YPR). The active-site Proton donor is Y153. The active-site Schiff-base intermediate with substrate is the K184. 1-deoxy-D-threo-hexo-2,5-diulose 6-phosphate contacts are provided by residues 209–210 (GG) and 236–237 (GR).

Belongs to the DeoC/FbaB aldolase family. ADHS subfamily. In terms of assembly, homodecamer.

It carries out the reaction 1-deoxy-D-threo-hexo-2,5-diulose 6-phosphate + L-aspartate 4-semialdehyde = 2,3-dioxopropyl phosphate + 2-amino-2,3,7-trideoxy-D-lyxo-hept-6-ulosonate. Functionally, catalyzes a transaldol reaction between 6-deoxy-5-ketofructose 1-phosphate (DKFP) and L-aspartate semialdehyde (ASA) with an elimination of hydroxypyruvaldehyde phosphate to yield 2-amino-3,7-dideoxy-D-threo-hept-6-ulosonate (ADH). Plays a key role in an alternative pathway of the biosynthesis of 3-dehydroquinate (DHQ), which is involved in the canonical pathway for the biosynthesis of aromatic amino acids. This chain is 2-amino-3,7-dideoxy-D-threo-hept-6-ulosonate synthase, found in Methanococcus aeolicus (strain ATCC BAA-1280 / DSM 17508 / OCM 812 / Nankai-3).